Consider the following 106-residue polypeptide: NADH-quinone oxidoreductase subunit K (106 aa).

A run of 3 helical transmembrane segments spans residues 8–28, 35–55, and 66–86; these read IGIE…IFGV, IIMF…FVAF, and VFVF…LAIL.

It belongs to the complex I subunit 4L family. As to quaternary structure, NDH-1 is composed of 14 different subunits. Subunits NuoA, H, J, K, L, M, N constitute the membrane sector of the complex.

Its subcellular location is the cell inner membrane. It catalyses the reaction a quinone + NADH + 5 H(+)(in) = a quinol + NAD(+) + 4 H(+)(out). NDH-1 shuttles electrons from NADH, via FMN and iron-sulfur (Fe-S) centers, to quinones in the respiratory chain. The immediate electron acceptor for the enzyme in this species is believed to be a menaquinone. Couples the redox reaction to proton translocation (for every two electrons transferred, four hydrogen ions are translocated across the cytoplasmic membrane), and thus conserves the redox energy in a proton gradient. In Flavobacterium psychrophilum (strain ATCC 49511 / DSM 21280 / CIP 103535 / JIP02/86), this protein is NADH-quinone oxidoreductase subunit K.